A 124-amino-acid polypeptide reads, in one-letter code: Small ribosomal subunit protein uS12 (124 aa).

Position 89 is a 3-methylthioaspartic acid (aspartate 89). Residues 103 to 124 (DTAGVQNRNRGRSKYGAKRPKK) are disordered. Residues 111–124 (NRGRSKYGAKRPKK) are compositionally biased toward basic residues.

This sequence belongs to the universal ribosomal protein uS12 family. As to quaternary structure, part of the 30S ribosomal subunit. Contacts proteins S8 and S17. May interact with IF1 in the 30S initiation complex.

With S4 and S5 plays an important role in translational accuracy. In terms of biological role, interacts with and stabilizes bases of the 16S rRNA that are involved in tRNA selection in the A site and with the mRNA backbone. Located at the interface of the 30S and 50S subunits, it traverses the body of the 30S subunit contacting proteins on the other side and probably holding the rRNA structure together. The combined cluster of proteins S8, S12 and S17 appears to hold together the shoulder and platform of the 30S subunit. In Desulforudis audaxviator (strain MP104C), this protein is Small ribosomal subunit protein uS12.